We begin with the raw amino-acid sequence, 122 residues long: S-adenosylmethionine decarboxylase proenzyme (122 aa).

Ser-63 functions as the Schiff-base intermediate with substrate; via pyruvic acid in the catalytic mechanism. Pyruvic acid (Ser); by autocatalysis is present on Ser-63. His-68 functions as the Proton acceptor; for processing activity in the catalytic mechanism. Cys-83 (proton donor; for catalytic activity) is an active-site residue.

Belongs to the prokaryotic AdoMetDC family. Type 1 subfamily. Heterotetramer of two alpha and two beta chains arranged as a dimer of alpha/beta heterodimers. The cofactor is pyruvate. In terms of processing, is synthesized initially as an inactive proenzyme. Formation of the active enzyme involves a self-maturation process in which the active site pyruvoyl group is generated from an internal serine residue via an autocatalytic post-translational modification. Two non-identical subunits are generated from the proenzyme in this reaction, and the pyruvate is formed at the N-terminus of the alpha chain, which is derived from the carboxyl end of the proenzyme. The post-translation cleavage follows an unusual pathway, termed non-hydrolytic serinolysis, in which the side chain hydroxyl group of the serine supplies its oxygen atom to form the C-terminus of the beta chain, while the remainder of the serine residue undergoes an oxidative deamination to produce ammonia and the pyruvoyl group blocking the N-terminus of the alpha chain.

The enzyme catalyses S-adenosyl-L-methionine + H(+) = S-adenosyl 3-(methylsulfanyl)propylamine + CO2. It functions in the pathway amine and polyamine biosynthesis; S-adenosylmethioninamine biosynthesis; S-adenosylmethioninamine from S-adenosyl-L-methionine: step 1/1. Its function is as follows. Catalyzes the decarboxylation of S-adenosylmethionine to S-adenosylmethioninamine (dcAdoMet), the propylamine donor required for the synthesis of the polyamines spermine and spermidine from the diamine putrescine. The chain is S-adenosylmethionine decarboxylase proenzyme from Methanococcus maripaludis (strain DSM 14266 / JCM 13030 / NBRC 101832 / S2 / LL).